The sequence spans 213 residues: Cytidylate kinase (213 aa).

9 to 17 contributes to the ATP binding site; the sequence is GPAASGKGT.

It belongs to the cytidylate kinase family. Type 1 subfamily.

The protein localises to the cytoplasm. The enzyme catalyses CMP + ATP = CDP + ADP. It carries out the reaction dCMP + ATP = dCDP + ADP. The protein is Cytidylate kinase of Caulobacter vibrioides (strain ATCC 19089 / CIP 103742 / CB 15) (Caulobacter crescentus).